A 547-amino-acid polypeptide reads, in one-letter code: Phenylalanine--tRNA ligase beta subunit (547 aa).

The region spanning 269 to 344 is the B5 domain; the sequence is LDVRFMEVDV…IGYGYENITP (76 aa). The Mg(2+) site is built by Asp322, Asp328, Glu331, and Asp332.

It belongs to the phenylalanyl-tRNA synthetase beta subunit family. Type 2 subfamily. In terms of assembly, tetramer of two alpha and two beta subunits. The cofactor is Mg(2+).

Its subcellular location is the cytoplasm. It catalyses the reaction tRNA(Phe) + L-phenylalanine + ATP = L-phenylalanyl-tRNA(Phe) + AMP + diphosphate + H(+). The sequence is that of Phenylalanine--tRNA ligase beta subunit from Archaeoglobus fulgidus (strain ATCC 49558 / DSM 4304 / JCM 9628 / NBRC 100126 / VC-16).